A 221-amino-acid chain; its full sequence is Thyrotroph embryonic factor (221 aa).

The interval 72–116 is disordered; that stretch reads ESASSSTASPPSSSTAVFQPSETVSSTESSLEKERETPSPIDPNC. Positions 73–100 are enriched in low complexity; sequence SASSSTASPPSSSTAVFQPSETVSSTES. The region spanning 173–221 is the bZIP domain; it reads DEKYWTRRKKNNVAAKRSRDARRLKENQITIRAAFLEKENTALRTEVAD. The interval 175-195 is basic motif; sequence KYWTRRKKNNVAAKRSRDARR. Residues 196–203 are leucine-zipper; it reads LKENQITI.

This sequence belongs to the bZIP family. PAR subfamily. Binds DNA as a homodimer or a heterodimer. Can form a heterodimer with DBP.

The protein localises to the nucleus. In terms of biological role, transcription factor that binds to and transactivates the TSHB promoter. Binds to a minimal DNA-binding sequence 5'-[TC][AG][AG]TTA[TC][AG]-3'. In Phodopus sungorus (Striped hairy-footed hamster), this protein is Thyrotroph embryonic factor (TEF).